We begin with the raw amino-acid sequence, 1594 residues long: RB1-inducible coiled-coil protein 1 (1594 aa).

A phosphoserine mark is found at Ser222, Ser229, and Ser237. The residue at position 238 (Thr238) is a Phosphothreonine. A phosphoserine mark is found at Ser243, Ser253, Ser257, Ser261, and Ser266. The Nuclear localization signal signature appears at 566 to 569; sequence KPRK. Ser624, Ser647, Ser650, Ser652, Ser653, Ser734, Ser1091, Ser1222, Ser1370, and Ser1484 each carry phosphoserine. Positions 638 to 673 are disordered; it reads EQKASVSQTSPQSASSPRMESTAGITTTTSPRTPPP. The segment covering 641-654 has biased composition (low complexity); the sequence is ASVSQTSPQSASSP. An FFAT motif is present at residues 731–737; that stretch reads DFMSAVN. 2 coiled-coil regions span residues 859–1397 and 1438–1485; these read LKEK…SSSF and METS…SQSM.

It belongs to the ATG17 family. Part of a complex consisting of ATG13/KIAA0652, ULK1 and RB1CC1. This complex associates with ATG101. Interacts with PTK2/FAK1 and PTK2B/PYK2. Interacts with GABARAP and GABARAPL1. Interacts with ATG16L1; the interaction is required for ULK1 complex-dependent autophagy. Interacts with RNF111, SKI and SMAD7. Interacts with COP1 in the cytoplasm of proliferating cells in response to UV stimulation. Interacts with TP53. Interacts with C9orf72. Interacts with WDR45B. Interacts with ATG13; this interaction is increased in the absence of TMEM39A. Interacts with WIPI2. Interacts with TAX1BP1. Interacts (via phosphorylated FFAT motif) with MOSPD2, VAPA and VAPB. Post-translationally, phosphorylation at Ser-734 of the FFAT motif activates interaction with MOSPD2, VAPA and VAPB. In terms of tissue distribution, expression levels correlated closely with those of RB1 in cancer cell lines as well as in various normal human tissues. Abundantly expressed in human musculoskeletal and cultured osteosarcoma cells.

Its subcellular location is the nucleus. The protein resides in the cytoplasm. It localises to the cytosol. The protein localises to the preautophagosomal structure. It is found in the lysosome. Involved in autophagy. Regulates early events but also late events of autophagosome formation through direct interaction with Atg16L1. Required for the formation of the autophagosome-like double-membrane structure that surrounds the Salmonella-containing vacuole (SCV) during S.typhimurium infection and subsequent xenophagy. Involved in repair of DNA damage caused by ionizing radiation, which subsequently improves cell survival by decreasing apoptosis. Inhibits PTK2/FAK1 and PTK2B/PYK2 kinase activity, affecting their downstream signaling pathways. Plays a role as a modulator of TGF-beta-signaling by restricting substrate specificity of RNF111. Functions as a DNA-binding transcription factor. Is a potent regulator of the RB1 pathway through induction of RB1 expression. Plays a crucial role in muscular differentiation. Plays an indispensable role in fetal hematopoiesis and in the regulation of neuronal homeostasis. This is RB1-inducible coiled-coil protein 1 from Homo sapiens (Human).